The chain runs to 575 residues: MFGIQDTLGRGPALKEKSLGAEMDSVRSWVRNVGVVDANVAAQSGVALSRAHFEKQPPSNLRKSNFFHFVLALYDRQGQPVEIERTAFVDFVENDKEQGNEKTNNGTHYKLQLLYSNGVRTEQDLYVRLIDSVTKQPIAYEGQNKNPEMCRVLLTHEVMCSRCCEKKSCGNRNETPSDPVIIDRFFLKFFLKCNQNCLKTAGNPRDMRRFQVVLSTTVNVDGHVLAVSDNMFVHNNSKHGRRARRLDPSEATPCIKAISPSEGWTTGGAMVIIIGDNFFDGLQVVFGTMLVWSELITPHAIRVQTPPRHIPGVVEVTLSYKSKQFCKGAPGRFIYTALNEPTIDYGFQRLQKVIPRHPGDPERLAKEMLLKRAADLVEALYGTPHNNQDIILKRAADIAEALYSVPRNPSQIPALSSSPAHSGMMGINSYGSQLGVSISESTQGNNQGYIRNTSSISPRGYSSSSTPQQSNYSTSSNSMNGYSNVPMANLGVPGSPGFLNGSPTGSPYGIMSSSPTVGSSSTSSILPFSSSVFPAVKQKSAFAPVIRPQGSPSPACSSGNGNGFRAMTGLVVPPM.

Positions 62–65 are interaction with DNA; the sequence is RKSN. A C5-type zinc finger spans residues 150–169; that stretch reads CRVLLTHEVMCSRCCEKKSC. 2 interaction with DNA regions span residues 196–203 and 235–238; these read NCLKTAGN and NNSK. The IPT/TIG domain maps to 253 to 336; the sequence is PCIKAISPSE…KGAPGRFIYT (84 aa). Residues 441–453 are compositionally biased toward polar residues; that stretch reads STQGNNQGYIRNT. Residues 441 to 479 form a disordered region; sequence STQGNNQGYIRNTSSISPRGYSSSSTPQQSNYSTSSNSM. Residues 454–479 show a composition bias toward low complexity; it reads SSISPRGYSSSSTPQQSNYSTSSNSM.

It belongs to the COE family. In terms of assembly, forms either a homodimer or a heterodimer with a related family member. Interacts with SIX1.

It is found in the nucleus. Functionally, transcription factor that, in osteoblasts, activates the decoy receptor for RANKL, TNFRSF11B, which in turn regulates osteoclast differentiation. Acts in synergy with the Wnt-responsive LEF1/CTNNB1 pathway. Recognizes variations of the palindromic sequence 5'-ATTCCCNNGGGAATT-3'. In Bos taurus (Bovine), this protein is Transcription factor COE2 (EBF2).